Consider the following 220-residue polypeptide: Kinetochore protein Spc25 (220 aa).

The stretch at 41-119 forms a coiled coil; it reads ILLDVKEAAA…NEIMERIHTL (79 aa).

This sequence belongs to the SPC25 family. As to quaternary structure, component of the Ndc80 complex, which is composed of Ndc80, Nuf2 and Spc25.

It localises to the nucleus. The protein localises to the chromosome. It is found in the centromere. Its subcellular location is the kinetochore. Acts as a component of the essential kinetochore-associated Ndc80 complex, which is required for chromosome segregation and spindle checkpoint activity during meiosis and mitosis. Required for kinetochore integrity and the organization of stable microtubule binding sites in the outer plate of the kinetochore. Participates in SAC signaling that responds specifically to disruptions in spindle microtubule dynamics. The NDC80 complex synergistically enhances the affinity of the SKA1 complex for microtubules and may allow the NDC80 complex to track depolymerizing microtubules. The chain is Kinetochore protein Spc25 from Drosophila erecta (Fruit fly).